A 1193-amino-acid polypeptide reads, in one-letter code: Cysteine protease ATG4 (1193 aa).

Disordered regions lie at residues 23–284 (AAIA…NKMS) and 358–474 (WRPI…KKKS). Residues 35 to 49 (NLPPPPPPDRIPPPK) show a composition bias toward pro residues. A compositionally biased stretch (basic residues) spans 50–59 (GRSHQQKFKI). Basic and acidic residues-rich tracts occupy residues 60-72 (LRKEKDKDRRQPI), 117-127 (ANREEKKEKTS), and 140-153 (FGRDKDKDRGKPEE). The span at 170-185 (SSSTSTDSTTSRSITS) shows a compositional bias: low complexity. The span at 186–205 (AFTRQNSIQSRRSPRTSFGQ) shows a compositional bias: polar residues. Low complexity predominate over residues 227 to 238 (SSTTSHDPSSDP). Polar residues-rich tracts occupy residues 253-262 (QGASMSSLSR), 270-284 (GGTSRSPDTFPNKMS), and 389-447 (LSMN…STLS). Residue Cys-570 is the Nucleophile of the active site. Residues Asp-789 and His-791 contribute to the active site. 3 disordered regions span residues 807–869 (HSAK…SKYK), 899–924 (VPKSSFESNGAAQEQPKKQKGFTSTA), and 1000–1171 (QDEM…PARN). The segment covering 835–846 (RTPETPRSTTPS) has biased composition (low complexity). Composition is skewed to acidic residues over residues 1004–1029 (PSWEEDDDAGLESVSEPDFEGDEFEE) and 1070–1084 (HLDVEEANSTDDDNE). Basic and acidic residues-rich tracts occupy residues 1097-1112 (IARHLNRVDLSSKREQ) and 1152-1164 (PRYEQNGETEQER).

It belongs to the peptidase C54 family.

The protein resides in the cytoplasm. It localises to the nucleus. Its subcellular location is the preautophagosomal structure. The enzyme catalyses [protein]-C-terminal L-amino acid-glycyl-phosphatidylethanolamide + H2O = [protein]-C-terminal L-amino acid-glycine + a 1,2-diacyl-sn-glycero-3-phosphoethanolamine. Functionally, cysteine protease that plays a key role in cytoplasm to vacuole transport (Cvt) and autophagy by mediating both proteolytic activation and delipidation of ATG8. Required for selective autophagic degradation of the nucleus (nucleophagy) as well as for mitophagy which contributes to regulate mitochondrial quantity and quality by eliminating the mitochondria to a basal level to fulfill cellular energy requirements and preventing excess ROS production. The protease activity is required for proteolytic activation of ATG8: cleaves the C-terminal amino acid of ATG8 to reveal a C-terminal glycine. ATG8 ubiquitin-like activity requires the exposure of the glycine at the C-terminus for its conjugation to phosphatidylethanolamine (PE) and its insertion to membranes, which is necessary for autophagy. The ATG8-PE conjugate mediates tethering between adjacent membranes and stimulates membrane hemifusion, leading to expansion of the autophagosomal membrane during autophagy. In addition to the protease activity, also catalyzes deconjugation of PE-conjugated forms of ATG8 during macroautophagy: ATG8 delipidation is required to release the protein from membranes, which facilitates multiple events during macroautophagy, and especially for efficient autophagosome biogenesis, the assembly of ATG9-containing tubulovesicular clusters into phagophores/autophagosomes, and for the disassembly of PAS-associated ATG components. ATG8 delipidation by ATG4 also recycles ATG8-PE generated on inappropriate membranes to maintain a reservoir of unlipidated ATG8 that is required for autophagosome formation at the PAS. This is Cysteine protease ATG4 (ATG4) from Cryptococcus neoformans var. neoformans serotype D (strain JEC21 / ATCC MYA-565) (Filobasidiella neoformans).